The chain runs to 297 residues: Nucleotide-binding protein BTH_I0482 (297 aa).

An ATP-binding site is contributed by 8–15 (GISGSGKS). 57–60 (DARS) is a GTP binding site.

The protein belongs to the RapZ-like family.

In terms of biological role, displays ATPase and GTPase activities. This Burkholderia thailandensis (strain ATCC 700388 / DSM 13276 / CCUG 48851 / CIP 106301 / E264) protein is Nucleotide-binding protein BTH_I0482.